The chain runs to 263 residues: Type-2Bb cytolytic delta-endotoxin (263 aa).

It belongs to the cyt1/cyt2 endotoxin family. Post-translationally, active after proteolytic processing.

Its function is as follows. Kills the larvae of dipteran insects by making pores in the epithelial cell membrane of the insect midgut. The sequence is that of Type-2Bb cytolytic delta-endotoxin (cyt2Bb1) from Bacillus thuringiensis subsp. jegathesan.